A 517-amino-acid chain; its full sequence is Maturase K (517 aa).

Belongs to the intron maturase 2 family. MatK subfamily.

It localises to the plastid. The protein resides in the chloroplast. In terms of biological role, usually encoded in the trnK tRNA gene intron. Probably assists in splicing its own and other chloroplast group II introns. The chain is Maturase K from Caryota mitis (Burmese fishtail palm).